A 250-amino-acid chain; its full sequence is Ribosome-inactivating protein luffin-B (250 aa).

The active site involves glutamate 160.

This sequence belongs to the ribosome-inactivating protein family. Type 1 RIP subfamily.

The enzyme catalyses Endohydrolysis of the N-glycosidic bond at one specific adenosine on the 28S rRNA.. In Luffa aegyptiaca (Sponge gourd), this protein is Ribosome-inactivating protein luffin-B.